A 719-amino-acid chain; its full sequence is 1,4-alpha-glucan branching enzyme GlgB (719 aa).

The Nucleophile role is filled by aspartate 400. Glutamate 453 serves as the catalytic Proton donor.

It belongs to the glycosyl hydrolase 13 family. GlgB subfamily. In terms of assembly, monomer.

The catalysed reaction is Transfers a segment of a (1-&gt;4)-alpha-D-glucan chain to a primary hydroxy group in a similar glucan chain.. The protein operates within glycan biosynthesis; glycogen biosynthesis. In terms of biological role, catalyzes the formation of the alpha-1,6-glucosidic linkages in glycogen by scission of a 1,4-alpha-linked oligosaccharide from growing alpha-1,4-glucan chains and the subsequent attachment of the oligosaccharide to the alpha-1,6 position. This is 1,4-alpha-glucan branching enzyme GlgB from Chlamydia caviae (strain ATCC VR-813 / DSM 19441 / 03DC25 / GPIC) (Chlamydophila caviae).